Consider the following 359-residue polypeptide: Type-1 angiotensin II receptor (359 aa).

Over methionine 1–asparagine 25 the chain is Extracellular. A glycan (N-linked (GlcNAc...) asparagine) is linked at asparagine 4. Residues glutamine 15 and aspartate 17 each contribute to the angiotensin II site. 2 disulfides stabilise this stretch: cysteine 18-cysteine 274 and cysteine 101-cysteine 180. The chain crosses the membrane as a helical span at residues tyrosine 26–phenylalanine 55. Residues tyrosine 56–threonine 61 are Cytoplasmic-facing. Residues valine 62–alanine 89 form a helical membrane-spanning segment. Over methionine 90–asparagine 98 the chain is Extracellular. A helical transmembrane segment spans residues tyrosine 99–aspartate 125. Residues arginine 126–threonine 141 are Cytoplasmic-facing. Residues methionine 142–isoleucine 165 traverse the membrane as a helical segment. Residues histidine 166–threonine 190 lie on the Extracellular side of the membrane. Angiotensin II is bound at residue arginine 167. Asparagine 176 is a glycosylation site (N-linked (GlcNAc...) asparagine). The angiotensin II site is built by phenylalanine 182, histidine 183, and tyrosine 184. N-linked (GlcNAc...) asparagine glycosylation is present at asparagine 188. Residues leucine 191–threonine 216 traverse the membrane as a helical segment. Lysine 199 is an angiotensin II binding site. The Cytoplasmic segment spans residues leucine 217–phenylalanine 239. Residues lysine 240–leucine 268 form a helical membrane-spanning segment. The Extracellular segment spans residues glycine 269–aspartate 278. A helical transmembrane segment spans residues isoleucine 279–phenylalanine 304. Residues leucine 305–glutamate 359 are Cytoplasmic-facing. The span at threonine 336–lysine 350 shows a compositional bias: polar residues. The segment at threonine 336 to glutamate 359 is disordered. A lipid anchor (S-palmitoyl cysteine) is attached at cysteine 355.

It belongs to the G-protein coupled receptor 1 family. In terms of assembly, interacts with MAS1. Interacts with ARRB1. Interacts with FLNA (via filamin repeat 21); increases PKA-mediated phosphorylation of FLNA. C-terminal Ser or Thr residues may be phosphorylated. In terms of tissue distribution, adrenal medulla, cortex and kidney.

It localises to the cell membrane. Functionally, receptor for angiotensin II, a vasoconstricting peptide, which acts as a key regulator of blood pressure and sodium retention by the kidney. The activated receptor in turn couples to G-alpha proteins G(q) (GNAQ, GNA11, GNA14 or GNA15) and thus activates phospholipase C and increases the cytosolic Ca(2+) concentrations, which in turn triggers cellular responses such as stimulation of protein kinase C. The chain is Type-1 angiotensin II receptor (AGTR1) from Bos taurus (Bovine).